Reading from the N-terminus, the 333-residue chain is Minor fimbrium tip subunit MfA4 (333 aa).

Residues 1–18 (MKKYLLYASLLTSVLLFS) form the signal peptide. The N-palmitoyl cysteine moiety is linked to residue Cys19. Cys19 is lipidated: S-diacylglycerol cysteine. The propeptide occupies 19–53 (CSKNNPSEPVEDRSIEISIRVDDFTKTGETVRYER).

Belongs to the bacteroidetes fimbrillin superfamily. FimA/Mfa1 family. Component of the fimbrium tip. Minor fimbriae are composed of a structural subunit, most often Mfa1, and the accessory subunits Mfa3, Mfa4 and Mfa5. Mfa4 is required for Mfa3 and Mfa5 insertion into the fimbrium. Fimbrium assembly occurs by linear, head-to-tail oligomerization of fimbrial subunits. This is mediated via insertion of a C-terminal beta-strand from one subunit into a groove in the N-terminal domain of the following subunit.

The protein localises to the fimbrium. It localises to the cell outer membrane. Tip subunit of the minor fimbriae. These filamentous pili are attached to the cell surface; they mediate biofilm formation, adhesion onto host cells and onto other bacteria that are part of the oral microbiome. They play an important role in invasion of periodontal tissues and are recognized as major virulence factors. This Porphyromonas gingivalis (strain ATCC 33277 / DSM 20709 / CIP 103683 / JCM 12257 / NCTC 11834 / 2561) protein is Minor fimbrium tip subunit MfA4.